We begin with the raw amino-acid sequence, 148 residues long: Lysozyme C (148 aa).

The signal sequence occupies residues 1–18; that stretch reads MKVLIILGLVLLSVMVQG. In terms of domain architecture, C-type lysozyme spans 19–148; the sequence is KVFERCELAR…VSQYVQGCGV (130 aa). Intrachain disulfides connect Cys24/Cys146, Cys48/Cys134, Cys83/Cys99, and Cys95/Cys113. Active-site residues include Glu53 and Asp71.

Belongs to the glycosyl hydrolase 22 family. In terms of assembly, monomer.

The catalysed reaction is Hydrolysis of (1-&gt;4)-beta-linkages between N-acetylmuramic acid and N-acetyl-D-glucosamine residues in a peptidoglycan and between N-acetyl-D-glucosamine residues in chitodextrins.. Its function is as follows. Lysozymes have primarily a bacteriolytic function; those in tissues and body fluids are associated with the monocyte-macrophage system and enhance the activity of immunoagents. This is Lysozyme C (LYZ) from Callithrix jacchus (White-tufted-ear marmoset).